We begin with the raw amino-acid sequence, 688 residues long: Elongation factor G (688 aa).

In terms of domain architecture, tr-type G spans 8–282; sequence EKTRNIGIMA…AIIDYLPSPM (275 aa). GTP is bound by residues 17 to 24, 81 to 85, and 135 to 138; these read AHIDAGKT, DTPGH, and NKMD.

It belongs to the TRAFAC class translation factor GTPase superfamily. Classic translation factor GTPase family. EF-G/EF-2 subfamily.

It localises to the cytoplasm. Catalyzes the GTP-dependent ribosomal translocation step during translation elongation. During this step, the ribosome changes from the pre-translocational (PRE) to the post-translocational (POST) state as the newly formed A-site-bound peptidyl-tRNA and P-site-bound deacylated tRNA move to the P and E sites, respectively. Catalyzes the coordinated movement of the two tRNA molecules, the mRNA and conformational changes in the ribosome. The chain is Elongation factor G (fusA) from Apple proliferation phytoplasma.